A 4065-amino-acid polypeptide reads, in one-letter code: Polyketide synthase-nonribosomal peptide synthetase pyiS (4065 aa).

A Ketosynthase family 3 (KS3) domain is found at 6–440 (SEPVAIIGTG…GANCHAILEA (435 aa)). Catalysis depends on for beta-ketoacyl synthase activity residues cysteine 179, histidine 314, and histidine 360. Positions 552–875 (IFTGQGAQWP…PYTGVLSRGK (324 aa)) are acyl transferase. Residues 950-1087 (NELLGRQILD…CDVLVTYGDS (138 aa)) are N-terminal hotdog fold. One can recognise a PKS/mFAS DH domain in the interval 950–1260 (NELLGRQILD…TQPLFNPTEA (311 aa)). The tract at residues 951-1254 (ELLGRQILDG…QVEGLQTQPL (304 aa)) is dehydratase (DH) domain. The active-site Proton acceptor; for dehydratase activity is histidine 982. Residues 1102–1260 (EYFMLGVESD…TQPLFNPTEA (159 aa)) are C-terminal hotdog fold. Aspartate 1166 serves as the catalytic Proton donor; for dehydratase activity. A methyltransferase (MT) domain region spans residues 1409 to 1593 (AHGMPRYTKY…KQTGFSGIDT (185 aa)). Residues 2129 to 2302 (TYWLVGLSGT…NASVVHIGAI (174 aa)) are ketoreductase (KR)domain. The Carrier 1 domain occupies 2411 to 2492 (INSAEVYEII…EILETAQQLL (82 aa)). The residue at position 2452 (serine 2452) is an O-(pantetheine 4'-phosphoryl)serine. Residues 2497 to 2561 (LPKMDPNDKS…GAKKGETVSK (65 aa)) are disordered. Residues 2551 to 2561 (SGAKKGETVSK) are compositionally biased toward basic and acidic residues. The tract at residues 2645-3076 (SKKTPISFAQ…FSRNQALRLA (432 aa)) is condensation. The segment at 3112 to 3516 (DIAKQKSHSL…RLLLEGRIAD (405 aa)) is adenylation. In terms of domain architecture, Carrier 2 spans 3634 to 3714 (QDLNDTESRL…DMAALVDELS (81 aa)). Residue serine 3674 is modified to O-(pantetheine 4'-phosphoryl)serine. The tract at residues 3760–3975 (LTGSTGFLGR…LDFISVDEAA (216 aa)) is reductase-like.

The protein belongs to the NRP synthetase family.

It participates in mycotoxin biosynthesis. Functionally, hybrid PKS-NRPS synthetase; part of the gene cluster that mediates the biosynthesis of the mycotoxin pyrichalasin H, a tyrosine-derived cytochalasan that inhibits the growth of rice seedlings, but also inhibits lymphocyte capping and actin polymerization and alters cell morphology. Pyrichalasin H is indicated as the responsible agent for the genus-specific pathogenicity of M.grisea toward crabgrass. The first step in the pathway is catalyzed by the O-methyltransferase pyiA which methylates free tyrosine to generate the precursor O-methyltyrosine. The hybrid PKS-NRPS pyiS, assisted by the enoyl reductase pyiC, are responsible for fusion of the O-methyltyrosine precursor and the polyketide backbone. The polyketide synthase module (PKS) of pyiS is responsible for the synthesis of the polyketide backbone and the downstream nonribosomal peptide synthetase (NRPS) amidates the carboxyl end of the polyketide with the O-methyltyrosine precursor. As the NRPS A-domain demonstrates substrate tolerance, pyiS can also use phenylalanine, tyrosine and even para-chlorophenylalanine as amino acid precursor, which leads to the production of novel cytochalasans, including halogenated cytochalasans. Because pyiS lacks a designated enoylreductase (ER) domain, the required activity is provided the enoyl reductase pyiC. Reduction by the hydrolyase pyiE leads to 1,5-dihydropyrrolone, which is substrate for dehydration and intra-molecular Diels-Alder cyclization by the Diels-Alderase pyiF to yield the required isoindolone-fused macrocycle. The tailoring cytochrome P450 monooxygenases piyD and piyG catalyze the hydroxylation at C-18 and C-7, respectivily, whereas the short-chain dehydrogenase/reductase pyiH reduces the carbonyl at C-21 in preparation for the transfer of an acetyl group by the acetyltransferase pyiB. These 3 reactions whose order is not clear yet, lead to the production of O-methylpyrichalasin J, a deacetylated pyrichalasin H. Finally, pyiB to converts O-methylpyrichalasin J into the final product pyrichalasin H via acetylation of C-21. The polypeptide is Polyketide synthase-nonribosomal peptide synthetase pyiS (Pyricularia grisea (Crabgrass-specific blast fungus)).